The following is a 535-amino-acid chain: Cytochrome P450 monooxygenase atE (535 aa).

Position 455 (cysteine 455) interacts with heme.

Belongs to the cytochrome P450 family. The cofactor is heme.

It carries out the reaction 3-methylcatechol + AH2 + O2 = 3-methylbenzene-1,2,4-triol + A + H2O. Its pathway is secondary metabolite biosynthesis. Its function is as follows. Cytochrome P450 monooxygenase; part of the gene cluster that mediates the biosynthesis of terreic acid, a quinone epoxide inhibitor of Bruton's tyrosine kinase. The first step of the pathway is the synthesis of 6-methylsalicylic acid (6-MSA) by the 6-methylsalicylic acid synthase atX. In the biosynthesis of 6-MSA, atX utilizes one acetyl-CoA and three malonyl-CoAs as its substrates and catalyzes a series of programmed reactions including Claisen condensation, reduction, aldol cyclization, and the hydrolytic cleavage that yields 6-MSA. The 6-methylsalicylate 1-monooxygenase atA then catalyzes the decarboxylative hydroxylation of 6-MSA to 3-methylcatechol. The next step is the conversion of 3-methylcatechol to 3-methyl-1,2,4-benzenetriol by cytochrome P450 monooxygenase atE, which is enhanced by cytochrome P450 monooxygenase atG. Then, the epoxidase atD catalyzes the epoxidation and hydroxyl oxidation of 3-methyl-1,2,4-benzenetriol to terremutin. Lastly, GMC oxidoreductase atC oxidizes terremutin to terreic acid. This Aspergillus terreus (strain NIH 2624 / FGSC A1156) protein is Cytochrome P450 monooxygenase atE.